A 283-amino-acid polypeptide reads, in one-letter code: ATP phosphoribosyltransferase (283 aa).

This sequence belongs to the ATP phosphoribosyltransferase family. Long subfamily. Mg(2+) is required as a cofactor.

The protein localises to the cytoplasm. It catalyses the reaction 1-(5-phospho-beta-D-ribosyl)-ATP + diphosphate = 5-phospho-alpha-D-ribose 1-diphosphate + ATP. It functions in the pathway amino-acid biosynthesis; L-histidine biosynthesis; L-histidine from 5-phospho-alpha-D-ribose 1-diphosphate: step 1/9. Feedback inhibited by histidine. Its function is as follows. Catalyzes the condensation of ATP and 5-phosphoribose 1-diphosphate to form N'-(5'-phosphoribosyl)-ATP (PR-ATP). Has a crucial role in the pathway because the rate of histidine biosynthesis seems to be controlled primarily by regulation of HisG enzymatic activity. This Bacteroides thetaiotaomicron (strain ATCC 29148 / DSM 2079 / JCM 5827 / CCUG 10774 / NCTC 10582 / VPI-5482 / E50) protein is ATP phosphoribosyltransferase.